Here is a 377-residue protein sequence, read N- to C-terminus: Polar flagellin F (377 aa).

Coiled-coil stretches lie at residues 98–131 (QSAN…ETTS) and 302–339 (DSQR…IQDT).

The protein belongs to the bacterial flagellin family. Heteromer of multiple flagellin subunits including FlaA, FlaB/D, FlaC, FlaE and FlaF.

It localises to the secreted. It is found in the bacterial flagellum. Flagellin is the subunit protein which polymerizes to form the filaments of bacterial flagella. The chain is Polar flagellin F (flaF) from Vibrio parahaemolyticus serotype O3:K6 (strain RIMD 2210633).